The following is a 301-amino-acid chain: Bifunctional protein FolD (301 aa).

NADP(+)-binding positions include 164 to 166, serine 191, and isoleucine 232; that span reads GRS.

The protein belongs to the tetrahydrofolate dehydrogenase/cyclohydrolase family. Homodimer.

The catalysed reaction is (6R)-5,10-methylene-5,6,7,8-tetrahydrofolate + NADP(+) = (6R)-5,10-methenyltetrahydrofolate + NADPH. The enzyme catalyses (6R)-5,10-methenyltetrahydrofolate + H2O = (6R)-10-formyltetrahydrofolate + H(+). It functions in the pathway one-carbon metabolism; tetrahydrofolate interconversion. Catalyzes the oxidation of 5,10-methylenetetrahydrofolate to 5,10-methenyltetrahydrofolate and then the hydrolysis of 5,10-methenyltetrahydrofolate to 10-formyltetrahydrofolate. The protein is Bifunctional protein FolD of Borreliella afzelii (strain PKo) (Borrelia afzelii).